Here is a 440-residue protein sequence, read N- to C-terminus: ATP-dependent protease ATPase subunit HslU (440 aa).

Residues I18, 60 to 65, D253, E318, and R390 each bind ATP; that span reads GVGKTE.

This sequence belongs to the ClpX chaperone family. HslU subfamily. A double ring-shaped homohexamer of HslV is capped on each side by a ring-shaped HslU homohexamer. The assembly of the HslU/HslV complex is dependent on binding of ATP.

The protein resides in the cytoplasm. Its function is as follows. ATPase subunit of a proteasome-like degradation complex; this subunit has chaperone activity. The binding of ATP and its subsequent hydrolysis by HslU are essential for unfolding of protein substrates subsequently hydrolyzed by HslV. HslU recognizes the N-terminal part of its protein substrates and unfolds these before they are guided to HslV for hydrolysis. The polypeptide is ATP-dependent protease ATPase subunit HslU (Shewanella oneidensis (strain ATCC 700550 / JCM 31522 / CIP 106686 / LMG 19005 / NCIMB 14063 / MR-1)).